We begin with the raw amino-acid sequence, 189 residues long: Tumor protein p53-inducible protein 11 (189 aa).

Residues 1-63 (MAAKQPPPLM…FAVREPLGLR (63 aa)) are Cytoplasmic-facing. Ser14 carries the post-translational modification Phosphoserine. Residues 64-84 (VWQFLSAMLFSSVAIMALALP) form a helical membrane-spanning segment. Residues 85–108 (DQLYDAVFDGAEVTSKTPIRLYGG) are Extracellular-facing. Residues 109–129 (ALLSISLIMWNALYTAEKVII) traverse the membrane as a helical segment. A topological domain (cytoplasmic) is located at residue Arg130. The helical transmembrane segment at 131 to 151 (WTLLTEACYFGVQSLVVTATL) threads the bilayer. The Extracellular segment spans residues 152-155 (AETG). The helical transmembrane segment at 156–176 (LMSLGTLLLLASRLLFVIVSI) threads the bilayer. Over 177–189 (YYYYQVGRKPKKV) the chain is Cytoplasmic.

The protein localises to the membrane. This chain is Tumor protein p53-inducible protein 11 (Tp53i11), found in Rattus norvegicus (Rat).